We begin with the raw amino-acid sequence, 173 residues long: CASP-like protein 2D1 (173 aa).

Residues 1-9 (MAPLLKLLD) lie on the Cytoplasmic side of the membrane. A helical membrane pass occupies residues 10–29 (SSLRVSVIPLSAATIWLTVT). Residues 30-50 (NHQDNSSYGNLKYSNIMGLKY) lie on the Extracellular side of the membrane. The N-linked (GlcNAc...) asparagine glycan is linked to asparagine 34. Residues 51-71 (MVCISAICASYAFVAAVSIWI) traverse the membrane as a helical segment. Topologically, residues 72–86 (KCLVNKVWLFFVSDQ) are cytoplasmic. The chain crosses the membrane as a helical span at residues 87–107 (IIAYLMVTSVAAAMEILYIAY). The Extracellular segment spans residues 108-131 (NGDQKVTWSEACTSYGKFCNGMKT). A helical membrane pass occupies residues 132 to 152 (ALILHALTLCFFIVLAVISAY). Topologically, residues 153-173 (RAFSMYQPPVSSKETVEGDAT) are cytoplasmic.

The protein belongs to the Casparian strip membrane proteins (CASP) family. As to quaternary structure, homodimer and heterodimers.

The protein resides in the cell membrane. The polypeptide is CASP-like protein 2D1 (Ricinus communis (Castor bean)).